We begin with the raw amino-acid sequence, 133 residues long: UPF0344 protein SE_0666 (133 aa).

Helical transmembrane passes span 1–21 (MLHVHILSWVLAIILFIATYL), 42–62 (LFMLLTLISGFWELIEEFMAA), 71–91 (MLLTLKMLCGLAVIAFMEISI), and 103–123 (FFWITIILIIITMAIGVILPW).

This sequence belongs to the UPF0344 family.

Its subcellular location is the cell membrane. In Staphylococcus epidermidis (strain ATCC 12228 / FDA PCI 1200), this protein is UPF0344 protein SE_0666.